Reading from the N-terminus, the 260-residue chain is DNA repair protein RecO (260 aa).

Belongs to the RecO family.

In terms of biological role, involved in DNA repair and RecF pathway recombination. The polypeptide is DNA repair protein RecO (Ligilactobacillus salivarius (strain UCC118) (Lactobacillus salivarius)).